We begin with the raw amino-acid sequence, 379 residues long: Cytochrome b (379 aa).

4 helical membrane-spanning segments follow: residues 33 to 53 (FGSLLGMCLMIQILTGLFLAM), 77 to 98 (WLIRYLHANGASMFFICLFIHV), 113 to 133 (WNIGIILFLMTMATAFVGYVL), and 178 to 198 (FFAFHFILPFIIAAFALVHLL). Heme b contacts are provided by H83 and H97. Heme b is bound by residues H182 and H196. A ubiquinone is bound at residue H201. A run of 4 helical transmembrane segments spans residues 226–246 (TKDLLGIFLLLLVLMILALFF), 288–308 (LGGVLALVLSILILAAFPLLN), 320–340 (VTQVIYWIFIANLLVLTWIGG), and 347–367 (FTMIGQIASITYFAIITILMP).

It belongs to the cytochrome b family. The cytochrome bc1 complex contains 11 subunits: 3 respiratory subunits (MT-CYB, CYC1 and UQCRFS1), 2 core proteins (UQCRC1 and UQCRC2) and 6 low-molecular weight proteins (UQCRH/QCR6, UQCRB/QCR7, UQCRQ/QCR8, UQCR10/QCR9, UQCR11/QCR10 and a cleavage product of UQCRFS1). This cytochrome bc1 complex then forms a dimer. Heme b is required as a cofactor.

It is found in the mitochondrion inner membrane. Functionally, component of the ubiquinol-cytochrome c reductase complex (complex III or cytochrome b-c1 complex) that is part of the mitochondrial respiratory chain. The b-c1 complex mediates electron transfer from ubiquinol to cytochrome c. Contributes to the generation of a proton gradient across the mitochondrial membrane that is then used for ATP synthesis. This chain is Cytochrome b (MT-CYB), found in Akodon fumeus (Smoky grass mouse).